Reading from the N-terminus, the 560-residue chain is Putative transport protein VV1438 (560 aa).

The next 5 membrane-spanning stretches (helical) occupy residues 5–25 (VVLLLQQNPILLIFVVLAIGL), 37–57 (LGNSIGVLITSLIMGHLGFSF), 66–86 (FMLFIYCVGIEAGPNFFGIFF), 91–111 (HYFTLSMVVLVTAVSISYFAS), and 164–184 (VGYAMAYLVGLISMIMFAKLL). RCK C-terminal domains follow at residues 203–292 (RGLG…FRNG) and 293–376 (KEVF…RIGF). Transmembrane regions (helical) follow at residues 386-406 (LLAFCSFFILGIMFGLVTMTF), 409-429 (VSFSLGNAVGLLLSGITLGFL), 443-463 (ALNMVKDLGLMIFMVGIGLSA), 478-498 (IIGIAFLVSVVPVFFAYLVGA), 506-526 (ALLFGAIIGARTCAPAMDIVN), and 539-559 (AGTYAIANILMTLAGTILIIL).

This sequence belongs to the AAE transporter (TC 2.A.81) family. YbjL subfamily.

It localises to the cell membrane. The sequence is that of Putative transport protein VV1438 from Vibrio vulnificus (strain YJ016).